A 159-amino-acid chain; its full sequence is Transmembrane protein 42 (159 aa).

A run of 4 helical transmembrane segments spans residues 37-57 (FWGVFNCLCAGAFGALAAASA), 68-88 (GFCVLGIIMMATTNSLMWTFF), 100-120 (IASVTVTFSNILNSAFLGFVL), and 124-144 (CQEVLWWGGVFLILCGLTLIH).

It localises to the membrane. In Bos taurus (Bovine), this protein is Transmembrane protein 42 (TMEM42).